The sequence spans 221 residues: Histone H1.3 (221 aa).

Low complexity predominate over residues 1–17 (MSETAPLAPTIPAPAEK). Residues 1-43 (MSETAPLAPTIPAPAEKTPVKKKAKKAGATAGKRKASGPPVSE) form a disordered region. Residue serine 2 is modified to N-acetylserine. At serine 2 the chain carries Phosphoserine. At lysine 17 the chain carries N6-acetyllysine. Position 18 is a phosphothreonine (threonine 18). Positions 20 to 36 (VKKKAKKAGATAGKRKA) are enriched in basic residues. Lysine 35, lysine 47, and lysine 53 each carry N6-(beta-hydroxybutyryl)lysine. The H15 domain occupies 37-110 (SGPPVSELIT…GASGSFKLNK (74 aa)). At arginine 55 the chain carries Citrulline. Residues lysine 65, lysine 76, lysine 86, and lysine 91 each carry the N6-(beta-hydroxybutyryl)lysine modification. Residues 90–221 (SKGTLVQTKG…KAKKAAPKKK (132 aa)) are disordered. The residue at position 105 (serine 105) is a Phosphoserine; by PKC. Residue lysine 107 is modified to N6-(beta-hydroxybutyryl)lysine. 3 stretches are compositionally biased toward basic residues: residues 120–141 (KAKK…KPKK), 150–161 (KSIKKTPKKVKK), and 170–179 (KVAKSAKKVK). Lysine 170 is subject to N6-(beta-hydroxybutyryl)lysine. Residues 180 to 193 (TPQPKKAAKSPAKA) show a composition bias toward low complexity. A compositionally biased stretch (basic residues) spans 194–221 (KAPKPKAAKPKSGKPKVTKAKKAAPKKK).

The protein belongs to the histone H1/H5 family. In terms of processing, H1 histones are progressively phosphorylated during the cell cycle, becoming maximally phosphorylated during late G2 phase and M phase, and being dephosphorylated sharply thereafter. Citrullination at Arg-55 (H1R54ci) by PADI4 takes place within the DNA-binding site of H1 and results in its displacement from chromatin and global chromatin decondensation, thereby promoting pluripotency and stem cell maintenance.

The protein resides in the nucleus. The protein localises to the chromosome. Functionally, histone H1 protein binds to linker DNA between nucleosomes forming the macromolecular structure known as the chromatin fiber. Histones H1 are necessary for the condensation of nucleosome chains into higher-order structured fibers. Also acts as a regulator of individual gene transcription through chromatin remodeling, nucleosome spacing and DNA methylation. In Homo sapiens (Human), this protein is Histone H1.3.